The following is a 484-amino-acid chain: Probable cobyric acid synthase (484 aa).

Residues Glu-247–Phe-433 enclose the GATase cobBQ-type domain. The Nucleophile role is filled by Cys-325. His-425 is an active-site residue.

It belongs to the CobB/CobQ family. CobQ subfamily.

Its pathway is cofactor biosynthesis; adenosylcobalamin biosynthesis. Catalyzes amidations at positions B, D, E, and G on adenosylcobyrinic A,C-diamide. NH(2) groups are provided by glutamine, and one molecule of ATP is hydrogenolyzed for each amidation. The chain is Probable cobyric acid synthase from Thermococcus onnurineus (strain NA1).